The primary structure comprises 608 residues: Glutamine--fructose-6-phosphate aminotransferase [isomerizing] (608 aa).

The active-site Nucleophile; for GATase activity is the C2. Residues 2–217 (CGIVGIVGNQ…DGDWAVIGKT (216 aa)) enclose the Glutamine amidotransferase type-2 domain. 2 SIS domains span residues 281-422 (ISDA…ARGT) and 456-598 (LSRE…VDQP). K603 (for Fru-6P isomerization activity) is an active-site residue.

Its subcellular location is the cytoplasm. It catalyses the reaction D-fructose 6-phosphate + L-glutamine = D-glucosamine 6-phosphate + L-glutamate. Involved in the production of the root hair deformation (HAD) factor specifically on medicago. This is Glutamine--fructose-6-phosphate aminotransferase [isomerizing] (nodM) from Rhizobium meliloti (strain 1021) (Ensifer meliloti).